The following is a 75-amino-acid chain: Large ribosomal subunit protein bL31 (75 aa).

C16, C18, C37, and C40 together coordinate Zn(2+).

Belongs to the bacterial ribosomal protein bL31 family. Type A subfamily. Part of the 50S ribosomal subunit. Zn(2+) is required as a cofactor.

In terms of biological role, binds the 23S rRNA. This is Large ribosomal subunit protein bL31 from Pseudomonas syringae pv. tomato (strain ATCC BAA-871 / DC3000).